The sequence spans 180 residues: Adenine phosphoribosyltransferase (180 aa).

Serine 2 carries the post-translational modification N-acetylserine. Serine 15 and serine 30 each carry phosphoserine. Tyrosine 60 bears the Phosphotyrosine mark. A Phosphoserine modification is found at serine 66. N6-acetyllysine is present on lysine 114. Residue threonine 135 is modified to Phosphothreonine.

It belongs to the purine/pyrimidine phosphoribosyltransferase family. As to quaternary structure, homodimer.

The protein localises to the cytoplasm. The enzyme catalyses AMP + diphosphate = 5-phospho-alpha-D-ribose 1-diphosphate + adenine. The protein operates within purine metabolism; AMP biosynthesis via salvage pathway; AMP from adenine: step 1/1. Catalyzes a salvage reaction resulting in the formation of AMP, that is energically less costly than de novo synthesis. This chain is Adenine phosphoribosyltransferase, found in Mus musculus (Mouse).